The following is a 500-amino-acid chain: MADWTEKYRPSTLSEVRGNDKARDAFADWARSWDDHHEAVVLHGSPGVGKTSAAHALANDMGWETVELNASDQRTADVIERFAGRAARNATLGGSAAGGGAAGGDTASRQLVILDEADNIHGNYDRGGASAITELVKESGQPIVLIANDYYDMARGLRNATQEIEFRDVSARSIVPVLRDICRKEGIEFESDALERIAERNRGDLRGAINDLQAATEGRDSIAVEDVVTGDRDKALGLFPYLDAVLKEESAEEALQSAYAVDETPDDLTKWIENNVLDVYDPSEVVRAYDFLANADVWLGRVRATQNYSYWRYATDNAAAGVAAARDGTKGGWTRYGRPQFWSPSDATADEVVGQIAAKSGCSVATARREVLPFLEAVTHHCKPRELTVAMAAAYDLDEAGIAFVTGSGESTNKVASIAEDAQALREERMEDHAEGAFAGGRHAADDLGASDGETTNASGTASSSGDDGDADGTTDGDGSDANDGNDDDDDGQAGLSDFV.

An ATP-binding site is contributed by 44–51 (GSPGVGKT). Residues 443–500 (HAADDLGASDGETTNASGTASSSGDDGDADGTTDGDGSDANDGNDDDDDGQAGLSDFV) form a disordered region. The span at 455–466 (TTNASGTASSSG) shows a compositional bias: low complexity. Over residues 467–492 (DDGDADGTTDGDGSDANDGNDDDDDG) the composition is skewed to acidic residues.

It belongs to the activator 1 small subunits family. RfcL subfamily. In terms of assembly, heteromultimer composed of small subunits (RfcS) and large subunits (RfcL).

Its function is as follows. Part of the RFC clamp loader complex which loads the PCNA sliding clamp onto DNA. The protein is Replication factor C large subunit of Halorubrum lacusprofundi (strain ATCC 49239 / DSM 5036 / JCM 8891 / ACAM 34).